The following is a 218-amino-acid chain: MRIILLGAPGAGKGTQAQFISTAFNIPQISTGDMLRAAIQAQTPLGLEAKKVMDDGKLVSDEIILKLVKERINEPDCQQGCLFDGFPRTLAQAEALRQENITINHVIEIDVDNEEIIQRMSGRRVHLASGRTYHVIFNPPKKEGVDDITGEPLIQREDDTEETVRKRLEIYHNQTAPLIDYYREWEEKDLLQAPKFSSIKGSGSVEEIREKIFTELNA.

10–15 is a binding site for ATP; sequence GAGKGT. The tract at residues 30–59 is NMP; the sequence is STGDMLRAAIQAQTPLGLEAKKVMDDGKLV. Residues T31, R36, 57-59, 85-88, and Q92 each bind AMP; these read KLV and GFPR. An LID region spans residues 122–159; it reads GRRVHLASGRTYHVIFNPPKKEGVDDITGEPLIQREDD. ATP-binding positions include R123 and 132-133; that span reads TY. AMP-binding residues include R156 and R167. G203 lines the ATP pocket.

The protein belongs to the adenylate kinase family. As to quaternary structure, monomer.

It is found in the cytoplasm. The enzyme catalyses AMP + ATP = 2 ADP. Its pathway is purine metabolism; AMP biosynthesis via salvage pathway; AMP from ADP: step 1/1. In terms of biological role, catalyzes the reversible transfer of the terminal phosphate group between ATP and AMP. Plays an important role in cellular energy homeostasis and in adenine nucleotide metabolism. This chain is Adenylate kinase, found in Prosthecochloris aestuarii (strain DSM 271 / SK 413).